A 540-amino-acid polypeptide reads, in one-letter code: 2,3-bisphosphoglycerate-independent phosphoglycerate mutase (540 aa).

Mn(2+)-binding residues include D13 and S63. S63 acts as the Phosphoserine intermediate in catalysis. Substrate is bound by residues H124, 154–155, R186, R192, 262–265, and K356; these read RD and RPDR. Mn(2+) contacts are provided by D423, H427, D464, H465, and H483.

Belongs to the BPG-independent phosphoglycerate mutase family. In terms of assembly, monomer. It depends on Mn(2+) as a cofactor.

It catalyses the reaction (2R)-2-phosphoglycerate = (2R)-3-phosphoglycerate. It participates in carbohydrate degradation; glycolysis; pyruvate from D-glyceraldehyde 3-phosphate: step 3/5. Functionally, catalyzes the interconversion of 2-phosphoglycerate and 3-phosphoglycerate. The protein is 2,3-bisphosphoglycerate-independent phosphoglycerate mutase of Chloroflexus aurantiacus (strain ATCC 29366 / DSM 635 / J-10-fl).